Reading from the N-terminus, the 334-residue chain is F-box only protein 16 (334 aa).

The F-box domain maps to 86–132 (LDFTTKLPRVLSVYIFSFLDPRSLCRCAQVSWYWKSLAELDQLWMLK). 2 disordered regions span residues 168–222 (PKTP…WRSS) and 314–334 (LEHL…QSQS). Over residues 194–204 (SPSLAFRSSSS) the composition is skewed to low complexity. A compositionally biased stretch (basic and acidic residues) spans 210–222 (NPGEKELPPWRSS). The span at 323–334 (LQSPSPRLQSQS) shows a compositional bias: low complexity.

In terms of assembly, part of a SCF (SKP1-cullin-F-box) protein ligase complex.

In terms of biological role, probably recognizes and binds to some phosphorylated proteins and promotes their ubiquitination and degradation. In Mus musculus (Mouse), this protein is F-box only protein 16 (Fbxo16).